The primary structure comprises 375 residues: Queuine tRNA-ribosyltransferase (375 aa).

Asp-90 functions as the Proton acceptor in the catalytic mechanism. Residues 90 to 94, Asp-144, Gln-190, and Gly-217 contribute to the substrate site; that span reads DSGGF. An RNA binding region spans residues 248–254; the sequence is GIGTPHY. Asp-267 serves as the catalytic Nucleophile. The segment at 272 to 276 is RNA binding; important for wobble base 34 recognition; that stretch reads TRIAR. Residues Cys-305, Cys-307, Cys-310, and His-336 each coordinate Zn(2+).

The protein belongs to the queuine tRNA-ribosyltransferase family. In terms of assembly, homodimer. Within each dimer, one monomer is responsible for RNA recognition and catalysis, while the other monomer binds to the replacement base PreQ1. Requires Zn(2+) as cofactor.

The catalysed reaction is 7-aminomethyl-7-carbaguanine + guanosine(34) in tRNA = 7-aminomethyl-7-carbaguanosine(34) in tRNA + guanine. It functions in the pathway tRNA modification; tRNA-queuosine biosynthesis. Its function is as follows. Catalyzes the base-exchange of a guanine (G) residue with the queuine precursor 7-aminomethyl-7-deazaguanine (PreQ1) at position 34 (anticodon wobble position) in tRNAs with GU(N) anticodons (tRNA-Asp, -Asn, -His and -Tyr). Catalysis occurs through a double-displacement mechanism. The nucleophile active site attacks the C1' of nucleotide 34 to detach the guanine base from the RNA, forming a covalent enzyme-RNA intermediate. The proton acceptor active site deprotonates the incoming PreQ1, allowing a nucleophilic attack on the C1' of the ribose to form the product. After dissociation, two additional enzymatic reactions on the tRNA convert PreQ1 to queuine (Q), resulting in the hypermodified nucleoside queuosine (7-(((4,5-cis-dihydroxy-2-cyclopenten-1-yl)amino)methyl)-7-deazaguanosine). The sequence is that of Queuine tRNA-ribosyltransferase from Borrelia duttonii (strain Ly).